Here is a 455-residue protein sequence, read N- to C-terminus: Alcohol acyl transferase 1 allele RGb (455 aa).

Catalysis depends on proton acceptor residues His164 and Asn385.

This sequence belongs to the plant acyltransferase family.

Involved in the biosynthesis of volatile esters which confer ripe apple fruit flavor. Alcohol acyl transferase that can use a wide range of alcohols as substrate to produce esters. This chain is Alcohol acyl transferase 1 allele RGb, found in Malus domestica (Apple).